The sequence spans 409 residues: Inactive serine protease 35 (409 aa).

Residues 1–20 (MENTLLWLVILIPGWALSDG) form the signal peptide. N-linked (GlcNAc...) asparagine glycosylation is present at Asn-90. A Peptidase S1 domain is found at 124-404 (VYGTDSRFSI…ICLWIHGNAA (281 aa)). A disulfide bond links Cys-154 and Cys-170. Residues 188-207 (VLKMRNKGGRKKRRGSKRSR) are compositionally biased toward basic residues. Residues 188-247 (VLKMRNKGGRKKRRGSKRSRREAESAGQSQAHLRESTTQRPGKKSRRGPRVTQGRPSFQW) are disordered.

Belongs to the peptidase S1 family. In terms of tissue distribution, in ovary, it localizes to the theca cells of pre-antral follicles, the theca and granulosa cells of pre-ovulatory and ovulatory follicles, as well as to the developing corpus luteum.

The protein resides in the secreted. The chain is Inactive serine protease 35 (Prss35) from Mus musculus (Mouse).